The chain runs to 342 residues: Phosphate acyltransferase (342 aa).

It belongs to the PlsX family. Homodimer. Probably interacts with PlsY.

The protein resides in the cytoplasm. It catalyses the reaction a fatty acyl-[ACP] + phosphate = an acyl phosphate + holo-[ACP]. The protein operates within lipid metabolism; phospholipid metabolism. Catalyzes the reversible formation of acyl-phosphate (acyl-PO(4)) from acyl-[acyl-carrier-protein] (acyl-ACP). This enzyme utilizes acyl-ACP as fatty acyl donor, but not acyl-CoA. This is Phosphate acyltransferase from Pelotomaculum thermopropionicum (strain DSM 13744 / JCM 10971 / SI).